The primary structure comprises 347 residues: Leucine-rich repeat-containing protein 69 (347 aa).

LRR repeat units follow at residues 38–60, 61–82, 84–105, 108–129, 131–153, 154–175, 177–199, and 200–222; these read GLKT…CNLT, QLTT…MKYL, SLKN…ACDG, NLIL…VSRL, SLTY…CFLE, NLVE…IKFL, KLQK…CDLK, and KLRI…QDLK.

The protein belongs to the LRRC69 family.

This is Leucine-rich repeat-containing protein 69 (LRRC69) from Homo sapiens (Human).